A 182-amino-acid polypeptide reads, in one-letter code: Transcription repressor OFP11 (182 aa).

The tract at residues 62–94 (PLHRRHSSENPAGVFSTNRREEEEEDETTTSVS) is disordered. An OVATE domain is found at 104–169 (MKHIESPDPY…VSAFADTLLW (66 aa)).

As to expression, expressed in roots, rosette and cauline leaves, shoots, stems, flower buds and siliques.

The protein resides in the nucleus. Transcriptional repressor that may regulate multiple aspects of plant growth and development through the regulation of BEL1-LIKE (BLH) and KNOX TALE (KNAT) homeodomain transcription factors. This chain is Transcription repressor OFP11 (OFP11), found in Arabidopsis thaliana (Mouse-ear cress).